We begin with the raw amino-acid sequence, 255 residues long: Protein N-terminal and lysine N-methyltransferase efm7 (255 aa).

Positions 1–25 (MADNDFEGFGIFEEPEGFRPSTPPP) are disordered. S-adenosyl-L-methionine is bound by residues W58, 84–86 (GAG), D106, W137, and S162.

Belongs to the class I-like SAM-binding methyltransferase superfamily. EFM7 family.

It is found in the cytoplasm. Its function is as follows. S-adenosyl-L-methionine-dependent protein methyltransferase that trimethylates the N-terminal glycine 'Gly-2' of elongation factor 1-alpha, before also catalyzing the mono- and dimethylation of 'Lys-3'. The chain is Protein N-terminal and lysine N-methyltransferase efm7 from Schizosaccharomyces pombe (strain 972 / ATCC 24843) (Fission yeast).